A 1113-amino-acid polypeptide reads, in one-letter code: Nucleoporin NUP116/NSP116 (1113 aa).

The interval 1 to 35 is disordered; that stretch reads MFGVSRGAFPSATTQPFGSTGSTFGGQQQQQQPVA. 4 FG repeats span residues 2–3, 17–18, 24–25, and 40–41; these read FG. A compositionally biased stretch (low complexity) spans 13-33; sequence TTQPFGSTGSTFGGQQQQQQP. The interval 49–91 is disordered; sequence TQAPAFGNFGNQTSNSPFGMSGSTTANGTPFGQSQLTNNNASG. A GLFG 1; approximate repeat occupies 55-58; the sequence is GNFG. FG repeat units follow at residues 66-67, 79-80, and 94-95; these read FG. An interaction with AFG2 region spans residues 92 to 172; sequence SIFGGMGNNT…AGRKFGTSQN (81 aa). Positions 110 to 166 are GLE2 binding sequence (GLEBS); the sequence is VVPNSTAGTSIKPFTTFEEKDPTTGVINVFQSITCMPEYRNFSFEELRFQDYQAGRK. The interval 160–362 is interaction with MEX67, not KAP95; sequence DYQAGRKFGT…AKPASGGLFG (203 aa). FG repeat units lie at residues 167–168 and 189–190; these read FG. The GLFG 2 repeat unit spans residues 205-208; it reads GLFG. The GLFG 3; approximate repeat unit spans residues 214 to 217; it reads GMFG. One copy of the GLFG 4; approximate repeat lies at 224 to 227; that stretch reads GGFG. A GLFG 5 repeat occupies 235–238; it reads GLFG. One copy of the FG 10 repeat lies at 249 to 250; the sequence is FG. 3 GLFG repeats span residues 259-262, 276-279, and 288-291; these read GLFG. Positions 265 to 279 are enriched in low complexity; it reads TNNPTNGTNNTGLFG. The disordered stretch occupies residues 265-341; it reads TNNPTNGTNN…SNANANGGAF (77 aa). A compositionally biased stretch (polar residues) spans 280-304; sequence QQNSNTNGGLFGQQQNSFGANNVSN. An FG 11 repeat occupies 297-298; sequence FG. The stretch at 306–309 is one GLFG 9; approximate repeat; the sequence is GAFG. Residues 327-330 form a GLFG 10; approximate repeat; the sequence is GIFG. A compositionally biased stretch (low complexity) spans 330-341; sequence GQSNANANGGAF. The GLFG 11; approximate repeat unit spans residues 339–342; that stretch reads GAFG. One copy of the FG 12 repeat lies at 351–352; it reads FG. Residues 359-362 form a GLFG 12 repeat; the sequence is GLFG. Residues 362-535 form a sufficient for interaction with MEX67 and KAP95 region; that stretch reads GQSAGSKAFG…GAKPTGFGNT (174 aa). Residues 370 to 371 form an FG 13 repeat; sequence FG. The interval 371–606 is disordered; it reads GMNTNPTGTT…NPASTSGGLF (236 aa). GLFG repeat units lie at residues 382-385, 395-398, 407-410, and 420-423; these read GLFG. The segment covering 410-438 has biased composition (low complexity); that stretch reads GQNNQSQNQSGLFGQQNSSNAFGQPQQQG. The stretch at 431–432 is one FG 14 repeat; the sequence is FG. 2 GLFG repeats span residues 439–442 and 448–451; these read GLFG. Residues 451-464 are compositionally biased toward polar residues; sequence GQQQGASTFASGNA. 2 stretches are compositionally biased toward low complexity: residues 465–478 and 485–522; these read QNNSIFGQNNQQQQ and GQQNNQSQSQPGGLFGQTNQNNNQPFGQNGLQQPQQNN. The FG 15 repeat unit spans residues 470–471; sequence FG. GLFG repeat units follow at residues 482–485 and 497–500; these read GLFG. FG repeat units follow at residues 510 to 511, 525 to 526, and 532 to 533; these read FG. The segment covering 532–569 has biased composition (polar residues); that stretch reads FGNTSLFSNSTTNQSNGISGNNLQQQSGGLFQNKQQPA. Residues 536-732 form an interaction with KAP95, not MEX67 region; that stretch reads SLFSNSTTNQ…QSQNALQQQQ (197 aa). GLFG repeat units lie at residues 572 to 575, 585 to 588, and 604 to 607; these read GLFG. Over residues 588–603 the composition is skewed to polar residues; it reads GNNQVANQNNPASTSG. One copy of the FG 19 repeat lies at 616-617; sequence FG. The GLFG 24; approximate repeat unit spans residues 630 to 633; sequence GIFG. GLFG repeat units lie at residues 648–651, 665–668, and 683–686; these read GLFG. Over residues 678–691 the composition is skewed to low complexity; the sequence is SNGSTGLFGSNNTS. 2 disordered regions span residues 678–736 and 868–939; these read SNGS…QQQR and SEEK…ENVA. Over residues 692–708 the composition is skewed to polar residues; it reads QSTNAGGLFQNNTSTNT. Residues 719–736 are compositionally biased toward low complexity; it reads QSMAQSQNALQQQQQQQR. Serine 886 carries the phosphoserine modification. Residues 916–939 show a composition bias toward basic and acidic residues; sequence NDGEDSATKHHSRNMDEENKENVA. Residues 967–1109 form the Peptidase S59 domain; sequence NENYYISPSL…GTYVFIVNHA (143 aa). The tract at residues 967–1113 is interaction with NUP82 NPC subcomplex; the sequence is NENYYISPSL…FIVNHAAEQT (147 aa). A nucleoporin RNA-binding motif (NRM) region spans residues 969 to 1108; that stretch reads NYYISPSLDT…SGTYVFIVNH (140 aa).

It belongs to the nucleoporin GLFG family. In terms of assembly, component of the nuclear pore complex (NPC). NPC constitutes the exclusive means of nucleocytoplasmic transport. NPCs allow the passive diffusion of ions and small molecules and the active, nuclear transport receptor-mediated bidirectional transport of macromolecules such as proteins, RNAs, ribonucleoparticles (RNPs), and ribosomal subunits across the nuclear envelope. Due to its 8-fold rotational symmetry, all subunits are present with 8 copies or multiples thereof. NUP116 interacts with the NUP82 subcomplex and GLE2. Through its FG repeats it interacts with numerous karyopherins including KAP95, PSE1 (GSP1-GDP dependent), MEX67, and to homomeric RNA. Interacts with CEX1. Interacts (via N-terminus) with AFG2 (via N-terminus).

The protein localises to the nucleus. It is found in the nuclear pore complex. Its subcellular location is the nucleus membrane. Its function is as follows. Functions as a component of the nuclear pore complex (NPC). NPC components, collectively referred to as nucleoporins (NUPs), can play the role of both NPC structural components and of docking or interaction partners for transiently associated nuclear transport factors. Active directional transport is assured by both, a Phe-Gly (FG) repeat affinity gradient for these transport factors across the NPC and a transport cofactor concentration gradient across the nuclear envelope (GSP1 and GSP2 GTPases associated predominantly with GTP in the nucleus, with GDP in the cytoplasm). Plays an important role in several nuclear export and import pathways including poly(A)+ RNA, tRNA, pre-ribosome, and protein transport. By binding ATPase AFG2, promotes AFG2-mediated release of shuttling protein RLP24 from pre-60S ribosomal particles. The polypeptide is Nucleoporin NUP116/NSP116 (NUP116) (Saccharomyces cerevisiae (strain ATCC 204508 / S288c) (Baker's yeast)).